We begin with the raw amino-acid sequence, 309 residues long: MQSNQENSKKGQYNLNKLQKRLRRNVGEAIADFNMIEEGDRIMVCLSGGKDSYTMLEILRNLQQSAPISFSLVAVNLDQKQPGFPAHILPEYLEQQGVEYKIVDEDTYSIVKEKIPEGKTTCSLCSRLRRGILYRTASELGCTKIALGHHRDDILQTLFLNMFYGGKMKGMPPKLMSDDGQHIVIRPLAYCREKDIERFAIARQYPIIPCNLCGSQPNLQRQVIGDMLRDWDKRYPGRIETMFTAMQNVVPSHLADADLFDFKQIRHGSEVIDGGDLAFDRETLPLQPSAWQPEEDEATPARLDVVQIR.

The PP-loop motif signature appears at 47-52 (SGGKDS). The [4Fe-4S] cluster site is built by Cys122, Cys125, and Cys213.

The protein belongs to the TtcA family. As to quaternary structure, homodimer. It depends on Mg(2+) as a cofactor. The cofactor is [4Fe-4S] cluster.

It is found in the cytoplasm. The enzyme catalyses cytidine(32) in tRNA + S-sulfanyl-L-cysteinyl-[cysteine desulfurase] + AH2 + ATP = 2-thiocytidine(32) in tRNA + L-cysteinyl-[cysteine desulfurase] + A + AMP + diphosphate + H(+). The protein operates within tRNA modification. Its function is as follows. Catalyzes the ATP-dependent 2-thiolation of cytidine in position 32 of tRNA, to form 2-thiocytidine (s(2)C32). The sulfur atoms are provided by the cysteine/cysteine desulfurase (IscS) system. This Erwinia tasmaniensis (strain DSM 17950 / CFBP 7177 / CIP 109463 / NCPPB 4357 / Et1/99) protein is tRNA-cytidine(32) 2-sulfurtransferase.